The sequence spans 378 residues: Rhodopsin (378 aa).

The Extracellular portion of the chain corresponds to 1-53 (MMSIASGPSHAAYTWTAQGGGFGNQTVVDKVPPEMLHLVDAHWYQFPPMNPLW). Asn-24 carries an N-linked (GlcNAc...) asparagine glycan. Residues 54-78 (HAILGFVIGILGMISVIGNGMVIYI) form a helical membrane-spanning segment. At 79 to 90 (FTTTKSLRTPSN) the chain is on the cytoplasmic side. A helical transmembrane segment spans residues 91–115 (LLVINLAISDFLMMLSMSPAMVINC). Over 116 to 130 (YYETWVLGPLVCELY) the chain is Extracellular. A disulfide bridge connects residues Cys-127 and Cys-204. Residues 131–150 (GLTGSLFGCGSIWTMTMIAF) traverse the membrane as a helical segment. The Cytoplasmic portion of the chain corresponds to 151 to 169 (DRYNVIVKGLSAKPMTING). Residues 170–193 (ALLRILGIWFFSLGWTIAPMFGWN) traverse the membrane as a helical segment. At 194–217 (RYVPEGNMTACGTDYLTKDLLSRS) the chain is on the extracellular side. Asn-200 carries an N-linked (GlcNAc...) asparagine glycan. Residues 218–245 (YILVYSFFCYFLPLFLIIYSYFFIIQAV) form a helical membrane-spanning segment. The Cytoplasmic segment spans residues 246–280 (AAHEKNMREQAKKMNVASLRSAENQSTSAECKLAK). The helical transmembrane segment at 281–304 (VALMTISLWFMAWTPYLVINYAGI) threads the bilayer. Residues 305–311 (FETVKIN) lie on the Extracellular side of the membrane. Residues 312–336 (PLFTIWGSLFAKANAVYNPIVYGIS) traverse the membrane as a helical segment. Lys-323 carries the post-translational modification N6-(retinylidene)lysine. Residues 337-378 (HPKYRAALFQRFPSLACSSGPAGADTLSTTTTVTEGTEKPAA) are Cytoplasmic-facing. The disordered stretch occupies residues 356 to 378 (GPAGADTLSTTTTVTEGTEKPAA). Residues 362 to 371 (TLSTTTTVTE) are compositionally biased toward low complexity.

It belongs to the G-protein coupled receptor 1 family. Opsin subfamily. In terms of processing, phosphorylated on some or all of the serine and threonine residues present in the C-terminal region.

Its subcellular location is the membrane. Visual pigments are the light-absorbing molecules that mediate vision. They consist of an apoprotein, opsin, covalently linked to cis-retinal. This Cataglyphis bombycina (Saharan silver ant) protein is Rhodopsin.